Here is a 324-residue protein sequence, read N- to C-terminus: Beta-ketoacyl-[acyl-carrier-protein] synthase III (324 aa).

Active-site residues include cysteine 112 and histidine 251. Residues 252–256 (QANLR) form an ACP-binding region. Asparagine 281 is a catalytic residue.

It belongs to the thiolase-like superfamily. FabH family. As to quaternary structure, homodimer.

The protein localises to the cytoplasm. It catalyses the reaction malonyl-[ACP] + acetyl-CoA + H(+) = 3-oxobutanoyl-[ACP] + CO2 + CoA. The protein operates within lipid metabolism; fatty acid biosynthesis. Its function is as follows. Catalyzes the condensation reaction of fatty acid synthesis by the addition to an acyl acceptor of two carbons from malonyl-ACP. Catalyzes the first condensation reaction which initiates fatty acid synthesis and may therefore play a role in governing the total rate of fatty acid production. Possesses both acetoacetyl-ACP synthase and acetyl transacylase activities. Its substrate specificity determines the biosynthesis of branched-chain and/or straight-chain of fatty acids. The chain is Beta-ketoacyl-[acyl-carrier-protein] synthase III from Clostridium perfringens (strain 13 / Type A).